Here is a 293-residue protein sequence, read N- to C-terminus: Homoserine kinase (293 aa).

84–94 contributes to the ATP binding site; it reads PLSRGLGSSSA.

It belongs to the GHMP kinase family. Homoserine kinase subfamily.

The protein localises to the cytoplasm. It carries out the reaction L-homoserine + ATP = O-phospho-L-homoserine + ADP + H(+). It functions in the pathway amino-acid biosynthesis; L-threonine biosynthesis; L-threonine from L-aspartate: step 4/5. Functionally, catalyzes the ATP-dependent phosphorylation of L-homoserine to L-homoserine phosphate. This Nautilia profundicola (strain ATCC BAA-1463 / DSM 18972 / AmH) protein is Homoserine kinase.